Reading from the N-terminus, the 427-residue chain is UDP-N-acetylglucosamine 1-carboxyvinyltransferase 2 (427 aa).

Residue 19–20 (KN) coordinates phosphoenolpyruvate. Arg91 contacts UDP-N-acetyl-alpha-D-glucosamine. Cys115 serves as the catalytic Proton donor. Cys115 carries the 2-(S-cysteinyl)pyruvic acid O-phosphothioketal modification. Asp307 and Val329 together coordinate UDP-N-acetyl-alpha-D-glucosamine.

The protein belongs to the EPSP synthase family. MurA subfamily.

The protein resides in the cytoplasm. It catalyses the reaction phosphoenolpyruvate + UDP-N-acetyl-alpha-D-glucosamine = UDP-N-acetyl-3-O-(1-carboxyvinyl)-alpha-D-glucosamine + phosphate. It participates in cell wall biogenesis; peptidoglycan biosynthesis. In terms of biological role, cell wall formation. Adds enolpyruvyl to UDP-N-acetylglucosamine. The protein is UDP-N-acetylglucosamine 1-carboxyvinyltransferase 2 of Prochlorococcus marinus (strain SARG / CCMP1375 / SS120).